Reading from the N-terminus, the 61-residue chain is UPF0181 protein KPN78578_22920 (61 aa).

Belongs to the UPF0181 family.

The protein is UPF0181 protein KPN78578_22920 of Klebsiella pneumoniae subsp. pneumoniae (strain ATCC 700721 / MGH 78578).